Consider the following 931-residue polypeptide: Probable ubiquitin-like-specific protease 2B (931 aa).

The segment at 204-224 (SLSDRSALSEASDSEDDEEDW) is disordered. A compositionally biased stretch (acidic residues) spans 215-224 (SDSEDDEEDW). Catalysis depends on residues His489, Asp522, and Cys577. The tract at residues 825 to 931 (HEEEIDESPP…PTGEAEEMEK (107 aa)) is disordered. Positions 839–851 (SLKSATVGSNTAD) are enriched in polar residues. Basic and acidic residues predominate over residues 873 to 904 (NDRDEEKPLEHDLEIGDKTSEDVGDDCDQKEP).

Belongs to the peptidase C48 family.

In terms of biological role, protease that catalyzes two essential functions in the SUMO pathway: processing of full-length SUMOs to their mature forms and deconjugation of SUMO from targeted proteins. The protein is Probable ubiquitin-like-specific protease 2B (ULP2B) of Arabidopsis thaliana (Mouse-ear cress).